We begin with the raw amino-acid sequence, 518 residues long: UNC5C-like protein (518 aa).

The Extracellular portion of the chain corresponds to 1 to 10; the sequence is MSPQESSVQP. The chain crosses the membrane as a helical; Signal-anchor for type III membrane protein span at residues 11 to 31; sequence SQFLLLVGIPVASALLLAQCL. The Cytoplasmic segment spans residues 32–518; it reads RWHCCQWLPG…NHGLELDEKL (487 aa). The region spanning 102–237 is the ZU5 domain; the sequence is VFSAREVDHR…FSLYTCVLEA (136 aa). Positions 186–400 are interaction with RELA and NFKB1; it reads QQPSQACAYS…ETWAVPPPVS (215 aa). The peptidase S68 stretch occupies residues 208–235; it reads PLGQPGTHISRDECRILLSHFSLYTCVL. Residues histidine 227 and serine 229 contribute to the active site. One can recognise a Death domain in the interval 415 to 494; sequence QLQMLLEPNS…SAIQNYLNRS (80 aa).

It belongs to the unc-5 family. In terms of assembly, interacts with p65/RELA and NFKB1.

It is found in the membrane. Its subcellular location is the cytoplasm. In terms of biological role, inhibits NF-kappa-B-dependent transcription by impairing NF-kappa-B binding to its targets. The polypeptide is UNC5C-like protein (Unc5cl) (Mus musculus (Mouse)).